The primary structure comprises 168 residues: MISNFDCTDNQASSKVLRPPGGGSSDIFGSEMPQTPRNVKNRMASNIFAAEKDNGVKNNVRQGAHRFYFIGDAPRRGQKTVDSHSRLFGEPTRPITPGKNHMKSSIPFGQNTEAVAAQKLLTTNGHYNGKSGSVSSASSSVSSSTENLKMNSGSRSGEKRLALTGAGK.

Polar residues predominate over residues 1-14; it reads MISNFDCTDNQASS. Residues 1–33 form a disordered region; that stretch reads MISNFDCTDNQASSKVLRPPGGGSSDIFGSEMP. Ser-24 carries the post-translational modification Phosphoserine. Residue Thr-35 is modified to Phosphothreonine. The segment covering 76–87 has biased composition (basic and acidic residues); that stretch reads RGQKTVDSHSRL. 2 disordered regions span residues 76 to 106 and 124 to 168; these read RGQK…KSSI and NGHY…GAGK. Thr-92 and Thr-96 each carry phosphothreonine. Residues Ser-105, Ser-133, and Ser-144 each carry the phosphoserine modification. A compositionally biased stretch (low complexity) spans 131-144; it reads SGSVSSASSSVSSS. Positions 145-155 are enriched in polar residues; the sequence is TENLKMNSGSR.

Belongs to the MAP Jupiter family.

The protein resides in the nucleus. It localises to the cytoplasm. The protein localises to the cytoskeleton. It is found in the spindle. Binds to all microtubule populations. The sequence is that of Microtubule-associated protein Jupiter from Drosophila simulans (Fruit fly).